Consider the following 168-residue polypeptide: Putative insulin-like growth factor 2 antisense gene protein (168 aa).

Disordered regions lie at residues 1–91 and 108–168; these read MSKR…ERSN and PLRR…RPGK. Composition is skewed to basic residues over residues 59–70 and 159–168; these read AQRRRGSARRGA and RWRQPGRPGK.

This chain is Putative insulin-like growth factor 2 antisense gene protein (IGF2-AS), found in Homo sapiens (Human).